The primary structure comprises 121 residues: uncharacterized protein (121 aa).

The 115-residue stretch at 7 to 121 (IFCKIVRGEV…GGREMSWPPG (115 aa)) folds into the HIT domain. The Histidine triad motif signature appears at 105–109 (HLHLH).

This is an uncharacterized protein from Aquifex aeolicus (strain VF5).